The sequence spans 257 residues: tRNA dimethylallyltransferase (257 aa).

Residue 15–22 (GPTASGKS) participates in ATP binding. 17–22 (TASGKS) is a binding site for substrate.

It belongs to the IPP transferase family. As to quaternary structure, monomer. It depends on Mg(2+) as a cofactor.

The enzyme catalyses adenosine(37) in tRNA + dimethylallyl diphosphate = N(6)-dimethylallyladenosine(37) in tRNA + diphosphate. In terms of biological role, catalyzes the transfer of a dimethylallyl group onto the adenine at position 37 in tRNAs that read codons beginning with uridine, leading to the formation of N6-(dimethylallyl)adenosine (i(6)A). This is tRNA dimethylallyltransferase from Oenococcus oeni (strain ATCC BAA-331 / PSU-1).